Here is a 266-residue protein sequence, read N- to C-terminus: 3-methyl-2-oxobutanoate hydroxymethyltransferase (266 aa).

Asp43 and Asp82 together coordinate Mg(2+). 3-methyl-2-oxobutanoate contacts are provided by residues Asp43–Ser44, Asp82, and Lys110. Residue Glu112 coordinates Mg(2+). Glu179 functions as the Proton acceptor in the catalytic mechanism.

This sequence belongs to the PanB family. As to quaternary structure, homodecamer; pentamer of dimers. Requires Mg(2+) as cofactor.

The protein resides in the cytoplasm. It catalyses the reaction 3-methyl-2-oxobutanoate + (6R)-5,10-methylene-5,6,7,8-tetrahydrofolate + H2O = 2-dehydropantoate + (6S)-5,6,7,8-tetrahydrofolate. Its pathway is cofactor biosynthesis; (R)-pantothenate biosynthesis; (R)-pantoate from 3-methyl-2-oxobutanoate: step 1/2. Functionally, catalyzes the reversible reaction in which hydroxymethyl group from 5,10-methylenetetrahydrofolate is transferred onto alpha-ketoisovalerate to form ketopantoate. This is 3-methyl-2-oxobutanoate hydroxymethyltransferase from Psychrobacter arcticus (strain DSM 17307 / VKM B-2377 / 273-4).